A 75-amino-acid chain; its full sequence is Pi-hexatoxin-Hi1a (75 aa).

6 cysteine pairs are disulfide-bonded: cysteine 3–cysteine 18, cysteine 10–cysteine 23, cysteine 17–cysteine 33, cysteine 40–cysteine 55, cysteine 47–cysteine 60, and cysteine 54–cysteine 71. Domain repeat units follow at residues cysteine 3 to cysteine 33 and cysteine 40 to cysteine 71. The tract at residues cysteine 3–cysteine 71 is 2 X approximate repeats with cysteine pattern C-C-CC-C-C.

It belongs to the psalmotoxin-1 family. Double-knot toxin subfamily. As to expression, expressed by the venom gland.

It localises to the secreted. This toxin potently and selectively inhibits ASIC1a (IC(50)=0.4 nM on rASIC1a and IC(50)=0.52 nM on hASIC1a), an isoform of the gene ASIC1. It incompletely inhibits ASIC1a activation in a pH-independent and slowly reversible manner (Tau(off)=14.2 minutes for rASIC1a and 31.8 minutes for hASIC1a). This toxin acts by binding to and stabilizing the closed state of the channel, thereby impeding the transition into a conducting state. This toxin may bind to the acidic pocket of ASIC1a, since mutation of a key residue of this pocket (Arg-350) abolishes the ability of the toxin to inhibit ASIC1a. In addition, it shows antiparasitic activities, since it moderately inhibits the larval development of the major pathogenic nematode of ruminants (H.contortus, IC(50)=22.9 uM). In vivo, this toxin protects the brain from neuronal injury when administered up to 8 hours after stroke onset. The chain is Pi-hexatoxin-Hi1a from Hadronyche infensa (Fraser island funnel-web spider).